The chain runs to 744 residues: Catalase-peroxidase 3 (744 aa).

Residues 106 to 228 (WHFAGTYRIG…LAASEMGLIY (123 aa)) constitute a cross-link (tryptophyl-tyrosyl-methioninium (Trp-Tyr) (with M-254)). The Proton acceptor role is filled by His-107. Positions 228-254 (YVDPQGPATLPDPLASARDIRETFRRM) form a cross-link, tryptophyl-tyrosyl-methioninium (Tyr-Met) (with W-106). Residue His-269 coordinates heme b.

The protein belongs to the peroxidase family. Peroxidase/catalase subfamily. In terms of assembly, homodimer or homotetramer. The cofactor is heme b. Formation of the three residue Trp-Tyr-Met cross-link is important for the catalase, but not the peroxidase activity of the enzyme.

It catalyses the reaction H2O2 + AH2 = A + 2 H2O. The catalysed reaction is 2 H2O2 = O2 + 2 H2O. In terms of biological role, bifunctional enzyme with both catalase and broad-spectrum peroxidase activity. This Mycolicibacterium smegmatis (strain ATCC 700084 / mc(2)155) (Mycobacterium smegmatis) protein is Catalase-peroxidase 3.